A 72-amino-acid chain; its full sequence is Disintegrin sasaimin (72 aa).

Residues 1-72 (EAGEECDCGA…SAGCPRNPFH (72 aa)) enclose the Disintegrin domain. Disulfide bonds link Cys-6–Cys-21, Cys-8–Cys-16, Cys-15–Cys-38, Cys-29–Cys-35, Cys-34–Cys-59, and Cys-47–Cys-66. The Cell attachment site motif lies at 51-53 (RGD).

It belongs to the venom metalloproteinase (M12B) family. P-II subfamily. P-IIa sub-subfamily. Monomer. In terms of tissue distribution, expressed by the venom gland.

Its subcellular location is the secreted. Its function is as follows. Inhibits ADP- (IC(50)=66 nM) and collagen-induced (IC(50)=100 nM) aggregation of human platelets. In vitro, inhibits adhesion of endothelial cells to vitronectin, type-I collagen and, to a lower degree, fibronectin and laminin. The protein is Disintegrin sasaimin of Cerrophidion sasai (Costa Rica montane pitviper).